We begin with the raw amino-acid sequence, 447 residues long: Pentatricopeptide repeat-containing protein At3g53170 (447 aa).

10 PPR repeats span residues 93-127 (RCKT…GLKP), 128-158 (TIDV…MKSV), 164-198 (DVFT…GVGC), 199-233 (STVT…GDSL), 235-269 (DVCT…GVQP), 270-304 (DITT…FFSL), 305-339 (TTVT…GVKP), 340-374 (NSIT…DVVL), 375-409 (DTPF…KCKP), and 410-444 (DKIT…GENL).

Belongs to the PPR family. P subfamily.

The polypeptide is Pentatricopeptide repeat-containing protein At3g53170 (Arabidopsis thaliana (Mouse-ear cress)).